The following is a 208-amino-acid chain: Uracil phosphoribosyltransferase (208 aa).

5-phospho-alpha-D-ribose 1-diphosphate-binding positions include arginine 78, arginine 103, and 130-138 (DPMFATGGT). Residues isoleucine 193 and 198-200 (GDA) contribute to the uracil site. Aspartate 199 is a 5-phospho-alpha-D-ribose 1-diphosphate binding site.

Belongs to the UPRTase family. Requires Mg(2+) as cofactor.

The enzyme catalyses UMP + diphosphate = 5-phospho-alpha-D-ribose 1-diphosphate + uracil. Its pathway is pyrimidine metabolism; UMP biosynthesis via salvage pathway; UMP from uracil: step 1/1. Allosterically activated by GTP. Functionally, catalyzes the conversion of uracil and 5-phospho-alpha-D-ribose 1-diphosphate (PRPP) to UMP and diphosphate. This chain is Uracil phosphoribosyltransferase, found in Campylobacter concisus (strain 13826).